The chain runs to 203 residues: ATP-dependent Clp protease proteolytic subunit (203 aa).

Serine 101 acts as the Nucleophile in catalysis. Histidine 126 is an active-site residue.

This sequence belongs to the peptidase S14 family. Component of the chloroplastic Clp protease core complex.

The protein localises to the plastid. The protein resides in the chloroplast stroma. It carries out the reaction Hydrolysis of proteins to small peptides in the presence of ATP and magnesium. alpha-casein is the usual test substrate. In the absence of ATP, only oligopeptides shorter than five residues are hydrolyzed (such as succinyl-Leu-Tyr-|-NHMec, and Leu-Tyr-Leu-|-Tyr-Trp, in which cleavage of the -Tyr-|-Leu- and -Tyr-|-Trp bonds also occurs).. Its function is as follows. Cleaves peptides in various proteins in a process that requires ATP hydrolysis. Has a chymotrypsin-like activity. Plays a major role in the degradation of misfolded proteins. This is ATP-dependent Clp protease proteolytic subunit from Marchantia polymorpha (Common liverwort).